We begin with the raw amino-acid sequence, 109 residues long: Profilin (109 aa).

This sequence belongs to the profilin family. Multimer. Occurs in many kinds of cells as a complex with monomeric actin in a 1:1 ratio.

It localises to the cytoplasm. The protein localises to the cytoskeleton. Binds to actin and affects the structure of the cytoskeleton. At high concentrations, profilin prevents the polymerization of actin, whereas it enhances it at low concentrations. By binding to PIP2, it inhibits the formation of IP3 and DG. The protein is Profilin of Actinidia deliciosa (Kiwi).